We begin with the raw amino-acid sequence, 141 residues long: Putative pre-16S rRNA nuclease (141 aa).

It belongs to the YqgF nuclease family.

It is found in the cytoplasm. In terms of biological role, could be a nuclease involved in processing of the 5'-end of pre-16S rRNA. In Coxiella burnetii (strain RSA 331 / Henzerling II), this protein is Putative pre-16S rRNA nuclease.